The chain runs to 313 residues: Formimidoylglutamase (313 aa).

His-130, Asp-155, His-157, Asp-159, Asp-241, and Asp-243 together coordinate Mn(2+).

It belongs to the arginase family. Requires Mn(2+) as cofactor.

It carries out the reaction N-formimidoyl-L-glutamate + H2O = formamide + L-glutamate. It functions in the pathway amino-acid degradation; L-histidine degradation into L-glutamate; L-glutamate from N-formimidoyl-L-glutamate (hydrolase route): step 1/1. In terms of biological role, catalyzes the conversion of N-formimidoyl-L-glutamate to L-glutamate and formamide. This is Formimidoylglutamase from Salmonella arizonae (strain ATCC BAA-731 / CDC346-86 / RSK2980).